We begin with the raw amino-acid sequence, 475 residues long: Aminodeoxychorismate synthase component 1 (475 aa).

It belongs to the anthranilate synthase component I family. In terms of assembly, monomer. Heterodimer consisting of two non-identical subunits: a glutamine amidotransferase subunit (PabA) and a aminodeoxychorismate synthase subunit (PabB). The cofactor is Mg(2+).

It catalyses the reaction chorismate + L-glutamine = 4-amino-4-deoxychorismate + L-glutamate. It functions in the pathway cofactor biosynthesis; tetrahydrofolate biosynthesis; 4-aminobenzoate from chorismate: step 1/2. Functionally, part of a heterodimeric complex that catalyzes the two-step biosynthesis of 4-amino-4-deoxychorismate (ADC), a precursor of p-aminobenzoate (PABA) and tetrahydrofolate. In the first step, a glutamine amidotransferase (PabA) generates ammonia as a substrate that, along with chorismate, is used in the second step, catalyzed by aminodeoxychorismate synthase (PabB) to produce ADC. The polypeptide is Aminodeoxychorismate synthase component 1 (pabB) (Streptomyces lividans).